The following is a 636-amino-acid chain: Sodium-dependent multivitamin transporter (636 aa).

A run of 12 helical transmembrane segments spans residues 24–44, 68–88, 101–121, 143–163, 176–196, 199–219, 256–276, 297–317, 336–356, 404–424, 428–448, and 456–476; these read FSLV…AIGL, CLPV…ILGV, FLGC…IPVF, ICGT…VLYA, LWLS…LGGL, VIWT…AVII, FWTL…VNQA, VFPC…VMFA, FVLY…GLFV, FGYG…GPVL, ISIF…GMFF, and AIVG…GSIV. 2 N-linked (GlcNAc...) asparagine glycosylation sites follow: N489 and N498. Residues 528-548 form a helical membrane-spanning segment; it reads LWYSAHNSTTVIVVGLIVSLL. The disordered stretch occupies residues 606–627; that stretch reads LRASGDKEPMTEASPVHQGTSP.

It belongs to the sodium:solute symporter (SSF) (TC 2.A.21) family. In terms of assembly, interacts with PDZD11.

The protein resides in the cell membrane. It is found in the apical cell membrane. The enzyme catalyses biotin(out) + 2 Na(+)(out) = biotin(in) + 2 Na(+)(in). It carries out the reaction (R)-pantothenate(out) + 2 Na(+)(out) = (R)-pantothenate(in) + 2 Na(+)(in). The catalysed reaction is (R)-lipoate(out) + 2 Na(+)(out) = (R)-lipoate(in) + 2 Na(+)(in). It catalyses the reaction iodide(out) + 2 Na(+)(out) = iodide(in) + 2 Na(+)(in). Sodium-dependent multivitamin transporter that mediates the electrogenic transport of pantothenate, biotin, lipoate and iodide. Functions as a Na(+)-coupled substrate symporter where the stoichiometry of Na(+):substrate is 2:1, creating an electrochemical Na(+) gradient used as driving force for substrate uptake. Required for biotin and pantothenate uptake in the intestine across the brush border membrane. Plays a role in the maintenance of intestinal mucosa integrity, by providing the gut mucosa with biotin. Contributes to the luminal uptake of biotin and pantothenate into the brain across the blood-brain barrier. This is Sodium-dependent multivitamin transporter (SLC5A6) from Oryctolagus cuniculus (Rabbit).